The primary structure comprises 217 residues: Spore coat protein F-like protein YhcQ (217 aa).

Positions methionine 1 to glutamine 11 are enriched in low complexity. The disordered stretch occupies residues methionine 1–glutamate 28.

The protein belongs to the CotF family.

It localises to the spore coat. In Bacillus subtilis (strain 168), this protein is Spore coat protein F-like protein YhcQ (yhcQ).